The primary structure comprises 532 residues: CTP synthase (532 aa).

The amidoligase domain stretch occupies residues 1 to 267 (MTKYIFVTGG…DDIVLEHLQL (267 aa)). Serine 13 is a CTP binding site. Serine 13 contacts UTP. ATP is bound at residue 14 to 19 (SIGKGI). Residue tyrosine 54 coordinates L-glutamine. Aspartate 71 contacts ATP. 2 residues coordinate Mg(2+): aspartate 71 and glutamate 141. CTP-binding positions include 148-150 (DIE), 188-193 (KTKPTQ), and lysine 224. Residues 188-193 (KTKPTQ) and lysine 224 each bind UTP. One can recognise a Glutamine amidotransferase type-1 domain in the interval 292–532 (RIGLVGKYVS…DFVGAALNNK (241 aa)). An L-glutamine-binding site is contributed by glycine 354. The Nucleophile; for glutamine hydrolysis role is filled by cysteine 381. L-glutamine contacts are provided by residues 382–385 (LGMQ), glutamate 405, and arginine 462. Catalysis depends on residues histidine 507 and glutamate 509.

Belongs to the CTP synthase family. Homotetramer.

It catalyses the reaction UTP + L-glutamine + ATP + H2O = CTP + L-glutamate + ADP + phosphate + 2 H(+). It carries out the reaction L-glutamine + H2O = L-glutamate + NH4(+). The enzyme catalyses UTP + NH4(+) + ATP = CTP + ADP + phosphate + 2 H(+). It functions in the pathway pyrimidine metabolism; CTP biosynthesis via de novo pathway; CTP from UDP: step 2/2. With respect to regulation, allosterically activated by GTP, when glutamine is the substrate; GTP has no effect on the reaction when ammonia is the substrate. The allosteric effector GTP functions by stabilizing the protein conformation that binds the tetrahedral intermediate(s) formed during glutamine hydrolysis. Inhibited by the product CTP, via allosteric rather than competitive inhibition. In terms of biological role, catalyzes the ATP-dependent amination of UTP to CTP with either L-glutamine or ammonia as the source of nitrogen. Regulates intracellular CTP levels through interactions with the four ribonucleotide triphosphates. This Listeria innocua serovar 6a (strain ATCC BAA-680 / CLIP 11262) protein is CTP synthase.